The chain runs to 570 residues: Periplasmic trehalase (570 aa).

Positions 1–34 (MIPPEIRRSVLLQKAIKLALAGTLLTFASFSATA) are cleaved as a signal peptide. Substrate is bound by residues R159, 166–167 (WD), N203, 212–214 (RSQ), 284–286 (RPE), and G317. Active-site proton donor/acceptor residues include D319 and E503. E518 provides a ligand contact to substrate. Residues 544 to 570 (KPCDSVPSTRPASLSATPTKTPSAATQ) are disordered. Positions 554–570 (PASLSATPTKTPSAATQ) are enriched in low complexity.

The protein belongs to the glycosyl hydrolase 37 family. As to quaternary structure, monomer.

The protein localises to the periplasm. The catalysed reaction is alpha,alpha-trehalose + H2O = alpha-D-glucose + beta-D-glucose. Functionally, provides the cells with the ability to utilize trehalose at high osmolarity by splitting it into glucose molecules that can subsequently be taken up by the phosphotransferase-mediated uptake system. The sequence is that of Periplasmic trehalase from Salmonella paratyphi B (strain ATCC BAA-1250 / SPB7).